Consider the following 395-residue polypeptide: 8-amino-7-oxononanoate synthase (395 aa).

Arg-24 is a binding site for substrate. 111-112 lines the pyridoxal 5'-phosphate pocket; sequence GF. His-136 contributes to the substrate binding site. Pyridoxal 5'-phosphate-binding positions include Ser-184, 209-212, and 240-243; these read DDAH and TLSK. Lys-243 bears the N6-(pyridoxal phosphate)lysine mark. Residue Thr-357 participates in substrate binding.

It belongs to the class-II pyridoxal-phosphate-dependent aminotransferase family. BioF subfamily. Homodimer. Pyridoxal 5'-phosphate serves as cofactor.

It catalyses the reaction 6-carboxyhexanoyl-[ACP] + L-alanine + H(+) = (8S)-8-amino-7-oxononanoate + holo-[ACP] + CO2. Its pathway is cofactor biosynthesis; biotin biosynthesis. Catalyzes the decarboxylative condensation of pimeloyl-[acyl-carrier protein] and L-alanine to produce 8-amino-7-oxononanoate (AON), [acyl-carrier protein], and carbon dioxide. This Alkaliphilus oremlandii (strain OhILAs) (Clostridium oremlandii (strain OhILAs)) protein is 8-amino-7-oxononanoate synthase.